Here is a 266-residue protein sequence, read N- to C-terminus: tRNA (guanine-N(1)-)-methyltransferase (266 aa).

S-adenosyl-L-methionine contacts are provided by residues G113 and 137–142 (LGDYVL).

This sequence belongs to the RNA methyltransferase TrmD family. In terms of assembly, homodimer.

It localises to the cytoplasm. It catalyses the reaction guanosine(37) in tRNA + S-adenosyl-L-methionine = N(1)-methylguanosine(37) in tRNA + S-adenosyl-L-homocysteine + H(+). In terms of biological role, specifically methylates guanosine-37 in various tRNAs. The chain is tRNA (guanine-N(1)-)-methyltransferase from Paenarthrobacter aurescens (strain TC1).